A 124-amino-acid chain; its full sequence is Fluoride-specific ion channel FluC (124 aa).

The next 4 helical transmembrane spans lie at 4-24 (VLYIAVFGALGCLSRYYLSGW), 32-52 (AFPYGTFAVNIVGAFCIGLIM), 67-87 (IGLTIGFLGGLTTFSTFSYET), and 101-121 (ANVLFSVMTCLVFTWLGIIVA). Na(+) is bound by residues Gly75 and Thr78.

This sequence belongs to the fluoride channel Fluc/FEX (TC 1.A.43) family.

The protein resides in the cell inner membrane. The enzyme catalyses fluoride(in) = fluoride(out). Its activity is regulated as follows. Na(+) is not transported, but it plays an essential structural role and its presence is essential for fluoride channel function. Functionally, fluoride-specific ion channel. Important for reducing fluoride concentration in the cell, thus reducing its toxicity. In Geotalea uraniireducens (strain Rf4) (Geobacter uraniireducens), this protein is Fluoride-specific ion channel FluC.